Here is a 259-residue protein sequence, read N- to C-terminus: Small ribosomal subunit protein uS7m (259 aa).

Residues 1–39 (MLRLIKQPLFRCASSGHLMKESLVFIHQTRTFQVGKFTS) constitute a mitochondrion transit peptide. Thr-157 is modified (phosphothreonine).

Belongs to the universal ribosomal protein uS7 family. Component of the mitochondrial small ribosomal subunit (mt-SSU). Mature yeast 74S mitochondrial ribosomes consist of a small (37S) and a large (54S) subunit. The 37S small subunit contains a 15S ribosomal RNA (15S mt-rRNA) and at least 32 different proteins. The 54S large subunit contains a 21S rRNA (21S mt-rRNA) and at least 45 different proteins.

It localises to the mitochondrion. Its function is as follows. Component of the mitochondrial ribosome (mitoribosome), a dedicated translation machinery responsible for the synthesis of mitochondrial genome-encoded proteins, including at least some of the essential transmembrane subunits of the mitochondrial respiratory chain. The mitoribosomes are attached to the mitochondrial inner membrane and translation products are cotranslationally integrated into the membrane. The protein is Small ribosomal subunit protein uS7m (rsm7) of Schizosaccharomyces pombe (strain 972 / ATCC 24843) (Fission yeast).